The primary structure comprises 1068 residues: Protein AF-10 (1068 aa).

The PHD-type 1 zinc-finger motif lies at 22-74 (IGGCCVCSDERGWAENPLVYCDGHGCSVAVHQACYGIVQVPTGPWFCRKCESQ). A C2HC pre-PHD-type zinc finger spans residues 79–112 (RVRCELCPHKDGALKRTDNGGWAHVVCALYIPEV). The tract at residues 106–190 (ALYIPEVQFA…EGNGADNVQY (85 aa)) is required for interaction with histone H3. The PHD-type 2 zinc finger occupies 135-198 (KTCYICDEQG…QYCGYCKYHF (64 aa)). Residues 207–260 (GSNRSYEQSLSDSSSHSQDKHHEKEKKKYKEKDKHKQKHKKQPEPSPALVPSLT) are disordered. S217 carries the phosphoserine modification. Positions 223-240 (SQDKHHEKEKKKYKEKDK) are enriched in basic and acidic residues. S252 bears the Phosphoserine mark. A Glycyl lysine isopeptide (Lys-Gly) (interchain with G-Cter in SUMO2) cross-link involves residue K280. Positions 296–305 (EVSAHTSSGK) are enriched in polar residues. Disordered stretches follow at residues 296 to 416 (EVSA…SFSS) and 428 to 506 (SQPK…SVAS). Residues 306 to 317 (DVSEARGSEGKG) show a composition bias toward basic and acidic residues. Over residues 340–351 (TAVSASSPFPQG) the composition is skewed to polar residues. The span at 352-372 (SFSGTPGSVKSSSGSSVQSPQ) shows a compositional bias: low complexity. Polar residues-rich tracts occupy residues 387-396 (YTHTQQPSST), 404-416 (SGSQEAAVNSFSS), and 428-446 (SQPKSFDNSPGELGSSSLP). S436 is subject to Phosphoserine. Positions 465 to 483 (EKKRKGNKQSKHGPGRPKG) are enriched in basic residues. The segment covering 490-506 (VSHLSVSSASPTSSVAS) has biased composition (low complexity). The residue at position 532 (S532) is a Phosphoserine. Over residues 583–594 (SGSGSSTPVSSS) the composition is skewed to low complexity. Disordered stretches follow at residues 583–613 (SGSGSSTPVSSSHIPQQSSGHLQQVGALSPS) and 660–698 (SESSQTDQDLGDNARSLGGRGSSPRGSLSPRSPVSNLQL). Positions 595 to 604 (HIPQQSSGHL) are enriched in polar residues. A compositionally biased stretch (low complexity) spans 681 to 692 (SSPRGSLSPRSP). Phosphoserine occurs at positions 686, 688, and 691. Residues 752 to 780 (LQVENRRLEEQIKNLTAKKERLQLLNAQL) form a leucine-zipper region. Disordered stretches follow at residues 786–869 (AITT…VSGV) and 1040–1068 (PFLTIHGDSTSQKVTRLSDKTGPVAQEKS). Over residues 787–816 (ITTNPSPSHQMHTYTAQTAPPPDSLNSSKS) the composition is skewed to polar residues. 2 stretches are compositionally biased toward low complexity: residues 836–850 (LTSSGQSTSSSSALS) and 857–869 (QSPAQQSSGVSGV). Positions 1040-1054 (PFLTIHGDSTSQKVT) are enriched in polar residues.

As to quaternary structure, self-associates. Interacts with FSTL3; the interaction enhances MLLT10 in vitro transcriptional activity and self-association. Interacts with YEATS4. Interacts with SS18. Interacts with DOT1L. Interacts with histone H3; interaction is necessary for MLLT10 binding to nucleosomes; interaction is inhibited by histone H3 'Lys-27' methylations (H3K27me1, H3K27me2 and H3K27me3) amd acetylation; interaction stabilizes association of MLLT10 at chromatin; interaction is essential for histone H3 'Lys-79' dimethylation (H3K79me2).

Its subcellular location is the nucleus. Probably involved in transcriptional regulation. Binds to cruciform DNA. In cells, binding to unmodified histone H3 regulates DOT1L functions including histone H3 'Lys-79' dimethylation (H3K79me2) and gene activation. The sequence is that of Protein AF-10 from Mus musculus (Mouse).